The sequence spans 431 residues: Glutamate--tRNA ligase 1 (431 aa).

The 'HIGH' region signature appears at 6–16 (PSPTGDMHIGN). The 'KMSKS' region signature appears at 235–239 (KMSKR). Position 238 (K238) interacts with ATP.

It belongs to the class-I aminoacyl-tRNA synthetase family. Glutamate--tRNA ligase type 1 subfamily. As to quaternary structure, monomer.

The protein resides in the cytoplasm. The enzyme catalyses tRNA(Glu) + L-glutamate + ATP = L-glutamyl-tRNA(Glu) + AMP + diphosphate. Functionally, catalyzes the attachment of glutamate to tRNA(Glu) in a two-step reaction: glutamate is first activated by ATP to form Glu-AMP and then transferred to the acceptor end of tRNA(Glu). The sequence is that of Glutamate--tRNA ligase 1 from Campylobacter jejuni (strain RM1221).